The chain runs to 97 residues: Co-chaperonin GroES (97 aa).

This sequence belongs to the GroES chaperonin family. As to quaternary structure, heptamer of 7 subunits arranged in a ring. Interacts with the chaperonin GroEL.

It is found in the cytoplasm. Its function is as follows. Together with the chaperonin GroEL, plays an essential role in assisting protein folding. The GroEL-GroES system forms a nano-cage that allows encapsulation of the non-native substrate proteins and provides a physical environment optimized to promote and accelerate protein folding. GroES binds to the apical surface of the GroEL ring, thereby capping the opening of the GroEL channel. This Pseudomonas savastanoi pv. phaseolicola (strain 1448A / Race 6) (Pseudomonas syringae pv. phaseolicola (strain 1448A / Race 6)) protein is Co-chaperonin GroES.